A 2111-amino-acid chain; its full sequence is Glutamate synthase [NADH] (2111 aa).

Cys69 acts as the Nucleophile in catalysis. Residues Cys69–Lys469 enclose the Glutamine amidotransferase type-2 domain. The tract at residues Gly969–Gly990 is disordered. FMN is bound at residue Val1139–Gly1191. Positions 1192, 1198, and 1203 each coordinate [3Fe-4S] cluster.

This sequence belongs to the glutamate synthase family. As to quaternary structure, homotrimer. [3Fe-4S] cluster is required as a cofactor. Requires FAD as cofactor. FMN serves as cofactor.

The protein localises to the cytoplasm. The enzyme catalyses 2 L-glutamate + NAD(+) = L-glutamine + 2-oxoglutarate + NADH + H(+). Its pathway is amino-acid biosynthesis; L-glutamate biosynthesis via GLT pathway; L-glutamate from 2-oxoglutarate and L-glutamine (NAD(+) route): step 1/1. It participates in energy metabolism; nitrogen metabolism. With respect to regulation, in the presence of 10 mM allantoin, the activity is reduced more than 25%. Functionally, forms L-glutamate from L-glutamine and 2-oxoglutarate. Represents an alternative pathway to L-glutamate dehydrogenase for the biosynthesis of L-glutamate. Participates with glutamine synthetase in ammonia assimilation processes. The enzyme is specific for NADH, L-glutamine and 2-oxoglutarate. This Schizosaccharomyces pombe (strain 972 / ATCC 24843) (Fission yeast) protein is Glutamate synthase [NADH] (glt1).